The chain runs to 341 residues: Glucokinase (341 aa).

18–23 (GDIGGT) lines the ATP pocket.

It belongs to the bacterial glucokinase family.

The protein localises to the cytoplasm. It catalyses the reaction D-glucose + ATP = D-glucose 6-phosphate + ADP + H(+). The polypeptide is Glucokinase (Mesorhizobium japonicum (strain LMG 29417 / CECT 9101 / MAFF 303099) (Mesorhizobium loti (strain MAFF 303099))).